Reading from the N-terminus, the 341-residue chain is Tetraacyldisaccharide 4'-kinase (341 aa).

64 to 71 (AVGGSGKT) is an ATP binding site.

It belongs to the LpxK family.

The enzyme catalyses a lipid A disaccharide + ATP = a lipid IVA + ADP + H(+). The protein operates within glycolipid biosynthesis; lipid IV(A) biosynthesis; lipid IV(A) from (3R)-3-hydroxytetradecanoyl-[acyl-carrier-protein] and UDP-N-acetyl-alpha-D-glucosamine: step 6/6. Its function is as follows. Transfers the gamma-phosphate of ATP to the 4'-position of a tetraacyldisaccharide 1-phosphate intermediate (termed DS-1-P) to form tetraacyldisaccharide 1,4'-bis-phosphate (lipid IVA). This chain is Tetraacyldisaccharide 4'-kinase, found in Azoarcus sp. (strain BH72).